Consider the following 401-residue polypeptide: 8-amino-7-oxononanoate synthase (401 aa).

Arg-24 is a binding site for substrate. Position 111–112 (111–112 (GF)) interacts with pyridoxal 5'-phosphate. His-137 contributes to the substrate binding site. Positions 183, 211, and 240 each coordinate pyridoxal 5'-phosphate. Lys-243 is modified (N6-(pyridoxal phosphate)lysine). Position 357 (Thr-357) interacts with substrate.

It belongs to the class-II pyridoxal-phosphate-dependent aminotransferase family. BioF subfamily. In terms of assembly, homodimer. The cofactor is pyridoxal 5'-phosphate.

The catalysed reaction is 6-carboxyhexanoyl-[ACP] + L-alanine + H(+) = (8S)-8-amino-7-oxononanoate + holo-[ACP] + CO2. It participates in cofactor biosynthesis; biotin biosynthesis. In terms of biological role, catalyzes the decarboxylative condensation of pimeloyl-[acyl-carrier protein] and L-alanine to produce 8-amino-7-oxononanoate (AON), [acyl-carrier protein], and carbon dioxide. This Xanthomonas axonopodis pv. citri (strain 306) protein is 8-amino-7-oxononanoate synthase.